The following is a 508-amino-acid chain: CXXC-type zinc finger protein 1 (508 aa).

A CXXC-type zinc finger spans residues 10-47; sequence EDVWKERCMNCIRCNDEKNCGTCWPCRNGKTCDMRKCF. Disordered stretches follow at residues 95–156 and 453–508; these read QQVE…EPDK and KSQS…TQNN. Composition is skewed to low complexity over residues 113 to 123 and 454 to 481; these read AAAAAQQRKAN and SQSTSSSASAHGATTPISSTSSSSSSSS.

In terms of assembly, component of the SET2 complex (also known as the SET1/COMPASS complex), which contains at least set-2, swd-2.1, cfp-1, rbbp-5, wdr-5.1, dpy-30 and ash-2. Within the complex, interacts with wdr-5.1, ash-2 and dpy-30. Also interacts with the SIN3S complex, which contains at least sin-3, hda-1, athp-1 and mrg-1. Interacts with sin-3, hda-1 and mrg-1.

The protein localises to the nucleus. Functionally, transcriptional activator that exhibits a unique DNA binding specificity for CpG motifs; enriched at promoters containing the trimethylation mark on histone H3 'Lys-4' (H3K4me3). Forms part of the SET2 complex and interacts with the SIN3S HDAC complex at promoters. Required for H3K4 trimethylation and plays a repressive role in the expression of heat shock and salt-inducible genes. Required for fertility, in cooperation with class I histone deacetylases (HDACs). The protein is CXXC-type zinc finger protein 1 of Caenorhabditis elegans.